The following is a 358-amino-acid chain: Peptide chain release factor 1 (358 aa).

The residue at position 232 (Gln232) is an N5-methylglutamine.

Belongs to the prokaryotic/mitochondrial release factor family. Methylated by PrmC. Methylation increases the termination efficiency of RF1.

It is found in the cytoplasm. Its function is as follows. Peptide chain release factor 1 directs the termination of translation in response to the peptide chain termination codons UAG and UAA. This Acidobacterium capsulatum (strain ATCC 51196 / DSM 11244 / BCRC 80197 / JCM 7670 / NBRC 15755 / NCIMB 13165 / 161) protein is Peptide chain release factor 1.